Here is a 181-residue protein sequence, read N- to C-terminus: Inorganic pyrophosphatase (181 aa).

Substrate-binding residues include Lys16, Arg30, and Tyr42. 3 residues coordinate Mg(2+): Asp52, Asp57, and Asp89. Tyr126 contacts substrate.

It belongs to the PPase family. As to quaternary structure, homohexamer. It depends on Mg(2+) as a cofactor.

It localises to the cytoplasm. The catalysed reaction is diphosphate + H2O = 2 phosphate + H(+). Functionally, catalyzes the hydrolysis of inorganic pyrophosphate (PPi) forming two phosphate ions. The sequence is that of Inorganic pyrophosphatase from Malacoplasma penetrans (strain HF-2) (Mycoplasma penetrans).